The sequence spans 505 residues: Deoxyguanosinetriphosphate triphosphohydrolase (505 aa).

In terms of domain architecture, HD spans 66-273 (RLTHSMEVQQ…MEAADDISYC (208 aa)).

This sequence belongs to the dGTPase family. Type 1 subfamily. As to quaternary structure, homotetramer. Mg(2+) is required as a cofactor.

The enzyme catalyses dGTP + H2O = 2'-deoxyguanosine + triphosphate + H(+). DGTPase preferentially hydrolyzes dGTP over the other canonical NTPs. This Salmonella schwarzengrund (strain CVM19633) protein is Deoxyguanosinetriphosphate triphosphohydrolase.